Here is a 417-residue protein sequence, read N- to C-terminus: Tyrosine--tRNA ligase (417 aa).

Residue tyrosine 39 participates in L-tyrosine binding. Positions 44–53 match the 'HIGH' region motif; it reads ATATSLHIGN. Positions 176 and 180 each coordinate L-tyrosine. The short motif at 236–240 is the 'KMSKS' region element; the sequence is KMGKS. Lysine 239 provides a ligand contact to ATP. The S4 RNA-binding domain occupies 350-416; sequence IGILSLLVTA…GKKKHVLVRP (67 aa).

This sequence belongs to the class-I aminoacyl-tRNA synthetase family. TyrS type 1 subfamily. Homodimer.

The protein localises to the cytoplasm. The catalysed reaction is tRNA(Tyr) + L-tyrosine + ATP = L-tyrosyl-tRNA(Tyr) + AMP + diphosphate + H(+). Catalyzes the attachment of tyrosine to tRNA(Tyr) in a two-step reaction: tyrosine is first activated by ATP to form Tyr-AMP and then transferred to the acceptor end of tRNA(Tyr). The sequence is that of Tyrosine--tRNA ligase from Mesorhizobium japonicum (strain LMG 29417 / CECT 9101 / MAFF 303099) (Mesorhizobium loti (strain MAFF 303099)).